Reading from the N-terminus, the 560-residue chain is Light-independent protochlorophyllide reductase subunit N (560 aa).

[4Fe-4S] cluster-binding residues include Cys-24, Cys-49, and Cys-109. The span at 173-182 shows a compositional bias: low complexity; the sequence is NSLFNQSSNS. Positions 173-210 are disordered; the sequence is NSLFNQSSNSPENLKTLNTKKDTFQNSTENSKTFSAEK. Over residues 196 to 206 the composition is skewed to polar residues; the sequence is FQNSTENSKTF.

The protein belongs to the BchN/ChlN family. In terms of assembly, protochlorophyllide reductase is composed of three subunits; ChlL, ChlN and ChlB. Forms a heterotetramer of two ChlB and two ChlN subunits. It depends on [4Fe-4S] cluster as a cofactor.

Its subcellular location is the plastid. The protein resides in the chloroplast. It catalyses the reaction chlorophyllide a + oxidized 2[4Fe-4S]-[ferredoxin] + 2 ADP + 2 phosphate = protochlorophyllide a + reduced 2[4Fe-4S]-[ferredoxin] + 2 ATP + 2 H2O. It participates in porphyrin-containing compound metabolism; chlorophyll biosynthesis (light-independent). Its function is as follows. Component of the dark-operative protochlorophyllide reductase (DPOR) that uses Mg-ATP and reduced ferredoxin to reduce ring D of protochlorophyllide (Pchlide) to form chlorophyllide a (Chlide). This reaction is light-independent. The NB-protein (ChlN-ChlB) is the catalytic component of the complex. This chain is Light-independent protochlorophyllide reductase subunit N, found in Tetradesmus obliquus (Green alga).